Reading from the N-terminus, the 539-residue chain is Dopamine receptor 2 (539 aa).

The Extracellular segment spans residues 1–113; it reads MVDDNGSSPE…LPNDRVGLLA (113 aa). N-linked (GlcNAc...) asparagine glycosylation is found at Asn5, Asn31, Asn47, and Asn68. A helical membrane pass occupies residues 114-134; that stretch reads FLFLFSFATVFGNSLVILAVI. Topologically, residues 135–145 are cytoplasmic; sequence RERYLHTATNY. A helical transmembrane segment spans residues 146-166; the sequence is FITSLAVADCLVGLVVMPFSA. The Extracellular portion of the chain corresponds to 167-189; that stretch reads LYEVLENTWFFGTDWCDIWRSLD. Residues Cys182 and Cys261 are joined by a disulfide bond. The helical transmembrane segment at 190–206 threads the bilayer; sequence VLFSTASILNLCVISLD. Residues 207-227 lie on the Cytoplasmic side of the membrane; sequence RYWAITDPFSYPMRMTVKRAA. The chain crosses the membrane as a helical span at residues 228–248; it reads GLIAAVWICSSAISFPAIVWW. At 249-266 the chain is on the extracellular side; sequence RAARDGEMPAYKCTFTEH. A helical transmembrane segment spans residues 267-287; the sequence is LGYLVFSSTISFYLPLLVMVF. The Cytoplasmic portion of the chain corresponds to 288–420; sequence TYCRIYRAAV…FAKEKKAAKT (133 aa). The interval 326–387 is disordered; it reads GGTTRDQQNQ…EPDDEPLSAL (62 aa). The span at 337-352 shows a compositional bias: gly residues; the sequence is SGGGGGGGGGGGGGGS. Residues 356–367 are compositionally biased toward basic residues; sequence SHSHSHHHHHNH. The chain crosses the membrane as a helical span at residues 421-441; sequence LGIVMGVFIICWLPFFVVNLL. Residues 442–453 lie on the Extracellular side of the membrane; that stretch reads SGFCIECIEHEE. The helical transmembrane segment at 454 to 474 threads the bilayer; that stretch reads IVSAIVTWLGWINSCMNPVIY. Over 475 to 539 the chain is Cytoplasmic; that stretch reads ACWSRDFRRA…RHNSCEQTYI (65 aa). Residues Cys492 and Cys493 are each lipidated (S-palmitoyl cysteine).

It belongs to the G-protein coupled receptor 1 family. In terms of tissue distribution, expressed in both central and peripheral nervous systems.

It localises to the cell membrane. Its function is as follows. Receptor for dopamine. The activity of this receptor is mediated by G proteins which activate adenylyl cyclase. Also capable of generating a calcium signal. In terms of antagonist responses, would be classed with the D1-like dopamine receptor group. This receptor is an attractive candidate for initiating biochemical cascades underlying olfactory learning. This is Dopamine receptor 2 (Dop1R2) from Drosophila melanogaster (Fruit fly).